The chain runs to 1420 residues: MKALLDLFKQTQGDEQFDVIKIGLASPEKIRSWSFGEVRKPEAINYRTFKPERDGLFCAKIFGPTKDYECLCGKYKRLKFRGIICEKCGVEVTLAKVRRERMGHIELAAPVAHIWFLKSLPSRLGMVLDMTLRDIERVLYFEAYVVVDPGMTPEGAMKRGQIMSEDEYIAKTEEYGDGVFTAIMGAEGIRDLLRSIDIDREVETIRADLKATGSDAKIKKYAKRLKVLEAFQTSGIKPDWMIMEVLPVLPPELRPLVPLDGGRFATSDLNDLYRRVINRNNRLKRLLELRAPEIIVRNEKRMLQEAVDSLLDNGRRGKAMTGANKRPLKSLAEMIKGKSGRFRQNLLGKRVDYSGRSVIVVGPTLKLHQCGLPKLMALELFKPFIFNKLETLGIATTIKAAKKEVESQTPIVWDILEEVIREHPIMLNRAPTLHRLGIQAFEPMLIEGKAIQLHPLVCAAFNADFDGDQMAVHVPLSLEAQMEARTLMLASNNVLFPANGEPSIVPSQDVVLGLYYATRDKINGKGEGMVFANITEVVRAYEAGQVELASRVAVRITEYEIVDKKAEGDARFAGKTKIYQTSVGRAILSEILPKGMSFEEINKPLKKKEISRLINTSFRKCGLRETVIFADRLLQSGFRLATNAGISVAIDDMLIPTSKERIITEASTKVKEYDKQFMSGLVTNQERYNNVVDIWGAAGDQVGKAMMDELSHVDVLDRNGKTVRQESFNSIYMMADSGARGSAAQIRQLAGMRGLMAKPDGSIIETPITANFREGLNVLQYFISTHGARKGLADTALKTANSGYLTRRLCDVTQDLVVIEEDCGATTGVTMKALVEGGEIIEALRDRILGRVCIGDIVHPDTQEVIVPNDTLLDEDHVDQIVALGIDEVKVRTVLSCLTRFGLCAKCYGRDLGRGGLVNVGEAVGVIAAQSIGEPGTQLTMRTFHIGGAASRALVASNIEAKSNGALKFSGTMRVVKNSRGEQIVISRSGEALIVDENGRERERHKVPYGATLLLKEDAAVKAGASLATWDPLTRPIISEYAGIARFDNVEEGVTVAKQVDEITGLSTLVVIDGKRRSAASKGVRPVINLIDDKGNDVMIAGTDHPVNIGLQVGALITVKDGQKVEVGEVLARIPIESQKTRDITGGLPRVAELFEARSPKDAAVLAKVTGTVSFGKETKGKQRLVITDMDGEANEFLIPKEKQVLVHDGQVVNKGEMIVEGPADPHDILTLKGIEELAIYIVDEVQDVYRLQGVKINDKHIEVIVRQMLRRVQVTDPGDTSFITGEQVERSKLYDENDRVIAEGKHPAQFDNVLLGITKASLSTDSFISAASFQETTRVLTEAAIMGKTDTLRGLKENVIIGRLIPAGTGLSYRRARKVREQFERDRAQMIAAEEEAMANMPVEIEAEVVALTGEADPS.

Residues Cys-70, Cys-72, Cys-85, and Cys-88 each coordinate Zn(2+). Positions 464, 466, and 468 each coordinate Mg(2+). Positions 823, 897, 904, and 907 each coordinate Zn(2+).

The protein belongs to the RNA polymerase beta' chain family. The RNAP catalytic core consists of 2 alpha, 1 beta, 1 beta' and 1 omega subunit. When a sigma factor is associated with the core the holoenzyme is formed, which can initiate transcription. Mg(2+) is required as a cofactor. Requires Zn(2+) as cofactor.

It carries out the reaction RNA(n) + a ribonucleoside 5'-triphosphate = RNA(n+1) + diphosphate. Its function is as follows. DNA-dependent RNA polymerase catalyzes the transcription of DNA into RNA using the four ribonucleoside triphosphates as substrates. This chain is DNA-directed RNA polymerase subunit beta', found in Polynucleobacter necessarius subsp. necessarius (strain STIR1).